A 165-amino-acid polypeptide reads, in one-letter code: Cyclic pyranopterin monophosphate synthase (165 aa).

Substrate contacts are provided by residues 78–80 and 116–117; these read LCH and ME. D131 is a catalytic residue.

The protein belongs to the MoaC family. In terms of assembly, homohexamer; trimer of dimers.

It catalyses the reaction (8S)-3',8-cyclo-7,8-dihydroguanosine 5'-triphosphate = cyclic pyranopterin phosphate + diphosphate. Its pathway is cofactor biosynthesis; molybdopterin biosynthesis. Catalyzes the conversion of (8S)-3',8-cyclo-7,8-dihydroguanosine 5'-triphosphate to cyclic pyranopterin monophosphate (cPMP). The polypeptide is Cyclic pyranopterin monophosphate synthase (Sinorhizobium fredii (strain NBRC 101917 / NGR234)).